Here is a 295-residue protein sequence, read N- to C-terminus: Trimeric intracellular cation channel type A (295 aa).

Residues 1-11 (MELLSALSLDD) lie on the Lumenal side of the membrane. A helical membrane pass occupies residues 12 to 32 (LAVAFSKLPVFPLFDVAYYII). The Cytoplasmic segment spans residues 33–51 (SILYLKYEPGAVDLSKRSP). Residues 52–72 (VASWLCAMLYCFGSYILADVL) traverse the membrane as a helical segment. Over 73-84 (LGESPIHYFSNN) the chain is Lumenal. Gly74 serves as a coordination point for Ca(2+). Residues 85 to 105 (ANILLASAVWYLTFFCPLNIF) traverse the membrane as a helical segment. At 106–144 (YKIVSFLPLKLVLVGMKEVVRVRKIAMGIHHAHHHYHHG) the chain is on the cytoplasmic side. 2 residues coordinate a 1,2-diacyl-sn-glycero-3-phospho-(1D-myo-inositol-4,5-bisphosphate): Lys122 and Arg126. The chain crosses the membrane as a helical span at residues 145–165 (WVIMVLIGWVKGSGVALMSNL). At 166-178 (EQLLRGVWKPETN) the chain is on the lumenal side. Residues 179–199 (EILHMSFPTKASLYGAILFTL) form a helical membrane-spanning segment. Topologically, residues 200 to 201 (QQ) are cytoplasmic. The helical transmembrane segment at 202-222 (AHWLPISKAYLIFFFTLFMAI) threads the bilayer. Residues 223–233 (CKIYMTATHSH) are Lumenal-facing. A helical membrane pass occupies residues 234–254 (GSPFAIFESGICCVLFGAANG). At 255–295 (DHDDHGDHHHHHDDHDVSHSTVKSKEELNEGTRKRKTKKAE) the chain is on the cytoplasmic side. Basic and acidic residues predominate over residues 259–286 (HGDHHHHHDDHDVSHSTVKSKEELNEGT). Residues 259–295 (HGDHHHHHDDHDVSHSTVKSKEELNEGTRKRKTKKAE) are disordered.

This sequence belongs to the TMEM38 family. As to quaternary structure, homotrimer; conformation seems to be controled by binding to diacylglycerol (DAG).

It is found in the sarcoplasmic reticulum membrane. The protein resides in the nucleus membrane. It catalyses the reaction K(+)(in) = K(+)(out). Channel activity is activated by a change of voltage within the sarcoplasmic reticulum lumen and blocked by luminal high Ca(2+) levels. Intracellular monovalent cation channel required for maintenance of rapid intracellular calcium release. Acts as a potassium counter-ion channel that functions in synchronization with calcium release from intracellular stores. Opened by a change of voltage within the sarcoplasmic reticulum lumen. In Xenopus tropicalis (Western clawed frog), this protein is Trimeric intracellular cation channel type A (tmem38a).